We begin with the raw amino-acid sequence, 112 residues long: Nitrogenase-stabilizing/protective protein NifW (112 aa).

Belongs to the NifW family. As to quaternary structure, homotrimer; associates with NifD.

Its function is as follows. May protect the nitrogenase Fe-Mo protein from oxidative damage. This chain is Nitrogenase-stabilizing/protective protein NifW, found in Burkholderia vietnamiensis (strain G4 / LMG 22486) (Burkholderia cepacia (strain R1808)).